The following is a 699-amino-acid chain: Elongation factor G (699 aa).

The tr-type G domain occupies 8 to 288; that stretch reads EDYRNFGIMA…AVVDYLPSPL (281 aa). GTP is bound by residues 17-24, 86-90, and 140-143; these read AHIDAGKT, DTPGH, and NKMD.

Belongs to the TRAFAC class translation factor GTPase superfamily. Classic translation factor GTPase family. EF-G/EF-2 subfamily.

It localises to the cytoplasm. Its function is as follows. Catalyzes the GTP-dependent ribosomal translocation step during translation elongation. During this step, the ribosome changes from the pre-translocational (PRE) to the post-translocational (POST) state as the newly formed A-site-bound peptidyl-tRNA and P-site-bound deacylated tRNA move to the P and E sites, respectively. Catalyzes the coordinated movement of the two tRNA molecules, the mRNA and conformational changes in the ribosome. The polypeptide is Elongation factor G (Agrobacterium fabrum (strain C58 / ATCC 33970) (Agrobacterium tumefaciens (strain C58))).